Here is a 948-residue protein sequence, read N- to C-terminus: Zinc finger CCCH domain-containing protein 3 (948 aa).

Disordered stretches follow at residues 25–108, 121–219, 265–296, and 336–493; these read HGNA…VPQQ, QNVV…RRTV, VDAGHTDQPVPSGSVGGPARPASGPRQAREAS, and NVCK…LKKT. The span at 56–74 shows a compositional bias: basic residues; sequence RPSRRGYSSHHGPSWRKKY. The segment covering 128–141 has biased composition (low complexity); sequence KPPSKSGSASASGA. Positions 157–166 are enriched in basic and acidic residues; that stretch reads QRPREGEGEP. Positions 372 to 398 are enriched in low complexity; that stretch reads SAPSKYKWKASSPSASSSSSFRWQSEA. A compositionally biased stretch (polar residues) spans 405–415; that stretch reads SQLSPVLSRSP. Serine 408 carries the phosphoserine modification. Residues 441 to 452 show a composition bias toward basic residues; it reads VKSRTKIIRRRS. 5 C3H1-type zinc fingers span residues 667–695, 699–722, 723–749, 750–777, and 778–800; these read EKRKEYCMYYNRFGRCNRGERCPYIHDPE, VCTRFVRGTCKKTDGTCPFSHHVS, KEKMPVCSYFLKGICSNSNCPYSHVYV, SRKAEVCSDFLKGYCPLGAKCKKKHTLL, and CPDFARRGACPRGAQCQLLHRTQ. Disordered stretches follow at residues 798-891 and 913-948; these read RTQK…HEAP and ISLQSSPSPGAQPRVRAPRAPLTKDSGKPLHIKPRL. The span at 834–846 shows a compositional bias: polar residues; the sequence is SASQRPTRQTPSS. 2 stretches are compositionally biased toward low complexity: residues 847–856 and 864–885; these read AALTAAAVAA and SASPSSSKASSSSSSSSSPPAS. Phosphoserine is present on residues serine 918 and serine 920.

As to quaternary structure, interacts with SMAD1, SMAD3, SMAD4, CPSF2 and CPSF3.

It is found in the nucleus. In terms of biological role, required for the export of polyadenylated mRNAs from the nucleus. Enhances ACVR1B-induced SMAD-dependent transcription. Binds to single-stranded DNA but not to double-stranded DNA in vitro. Involved in RNA cleavage. The protein is Zinc finger CCCH domain-containing protein 3 (ZC3H3) of Homo sapiens (Human).